A 188-amino-acid chain; its full sequence is Protein SSX3 (188 aa).

Residues 20–83 (KIQKAFDDIA…KRVTDFQGND (64 aa)) form the KRAB-related domain. Residues 113 to 162 (PKKPAEEGNVSKEVPEASGPQNDGKQLCPPGKPTTSEKINMISGPKRGEH) are disordered. Residues 115–127 (KPAEEGNVSKEVP) show a composition bias toward basic and acidic residues. At serine 123 the chain carries Phosphoserine.

Belongs to the SSX family. As to quaternary structure, interacts with SSX2IP.

Functionally, could act as a modulator of transcription. This chain is Protein SSX3 (SSX3), found in Homo sapiens (Human).